The sequence spans 322 residues: Undecaprenyl-phosphate 4-deoxy-4-formamido-L-arabinose transferase (322 aa).

The Cytoplasmic portion of the chain corresponds to 1 to 235 (MFEIHPVKKV…TCLTTTPLRM (235 aa)). Residues 236–256 (LSLLGSIIAIGGFSIAVLLVI) traverse the membrane as a helical segment. At 257–269 (LRLTFGPQWAAEG) the chain is on the periplasmic side. The chain crosses the membrane as a helical span at residues 270–290 (VFMLFAVLFTFIGAQFIGMGL). Topologically, residues 291–322 (LGEYIGRIYTDVRARPRYFVQQVIRPSSKENE) are cytoplasmic.

Belongs to the glycosyltransferase 2 family.

It localises to the cell inner membrane. The enzyme catalyses UDP-4-deoxy-4-formamido-beta-L-arabinose + di-trans,octa-cis-undecaprenyl phosphate = 4-deoxy-4-formamido-alpha-L-arabinopyranosyl di-trans,octa-cis-undecaprenyl phosphate + UDP. It functions in the pathway glycolipid biosynthesis; 4-amino-4-deoxy-alpha-L-arabinose undecaprenyl phosphate biosynthesis; 4-amino-4-deoxy-alpha-L-arabinose undecaprenyl phosphate from UDP-4-deoxy-4-formamido-beta-L-arabinose and undecaprenyl phosphate: step 1/2. It participates in bacterial outer membrane biogenesis; lipopolysaccharide biosynthesis. In terms of biological role, catalyzes the transfer of 4-deoxy-4-formamido-L-arabinose from UDP to undecaprenyl phosphate. The modified arabinose is attached to lipid A and is required for resistance to polymyxin and cationic antimicrobial peptides. The polypeptide is Undecaprenyl-phosphate 4-deoxy-4-formamido-L-arabinose transferase (Escherichia coli (strain SMS-3-5 / SECEC)).